We begin with the raw amino-acid sequence, 416 residues long: Phakinin (416 aa).

Residues 1-48 are disordered; it reads MSERRVAMDLPSGSNASMPLQRHRVSSLRGTRSPSSLDSPPASRTSAV. Ser2 bears the N-acetylserine mark. A head region spans residues 2 to 115; it reads SERRVAMDLP…HATAEDLGGC (114 aa). Ser27, Ser33, Ser36, and Ser91 each carry phosphoserine. The span at 28–48 shows a compositional bias: polar residues; sequence LRGTRSPSSLDSPPASRTSAV. The IF rod domain maps to 105 to 416; sequence NHATAEDLGG…HALLDREESN (312 aa). Coiled coils occupy residues 199–240 and 314–391; these read FRKA…SLSR and LAAA…ERAH. The segment at 397-416 is tail; sequence GQLQKDVASYHALLDREESN.

The protein belongs to the intermediate filament family. In terms of assembly, part of a complex required for lens intermediate filament formation composed of BFSP1, BFSP2, and CRYAA. Found in a complex composed of PPL (via C-terminal linker domain), BFSP1 and BFSP2 in the retinal lens. Within the complex interacts with PPL (via C-terminal linker domain) and with BFSP1. Identified in a complex that contains VIM, EZR, AHNAK, BFSP1, BFSP2, ANK2, PLEC, PRX and spectrin. Interacts with LGSN. Interacts with VIM. Expressed in the deep and shallow cortices of the retina lens (at protein level).

The protein resides in the cell membrane. Its subcellular location is the cytoplasm. It localises to the cytoskeleton. The protein localises to the cell cortex. In terms of biological role, required for the correct formation of lens intermediate filaments as part of a complex composed of BFSP1, BFSP2 and CRYAA. Plays a role in maintenance of retinal lens optical clarity. The protein is Phakinin of Rattus norvegicus (Rat).